Reading from the N-terminus, the 213-residue chain is Virulence factor 1 (213 aa).

The protein resides in the host mitochondrion. Functionally, plays a role in antagonizing the host innate immune response. In Norovirus (isolate Mouse/NoV/United States/MNV1/2002/GV) (MNV-1), this protein is Virulence factor 1.